Here is a 512-residue protein sequence, read N- to C-terminus: Secreted triacylglycerol lipase LIP5 (512 aa).

The signal sequence occupies residues Met-1 to Ala-17. Cys-118 and Cys-292 are joined by a disulfide. The active-site Nucleophile is the Ser-203. Residue Asn-316 is glycosylated (N-linked (GlcNAc...) asparagine). The active site involves Asp-352. Residue Asn-361 is glycosylated (N-linked (GlcNAc...) asparagine). The active site involves His-386. The N-linked (GlcNAc...) asparagine glycan is linked to Asn-453. The tract at residues Lys-480 to His-512 is disordered. A compositionally biased stretch (basic and acidic residues) spans Gly-488–Lys-497. Residues Ala-498–His-512 are compositionally biased toward basic residues.

It belongs to the AB hydrolase superfamily. Lipase family. Class Lip subfamily.

It is found in the secreted. The catalysed reaction is a triacylglycerol + H2O = a diacylglycerol + a fatty acid + H(+). It carries out the reaction a monoacylglycerol + H2O = glycerol + a fatty acid + H(+). The enzyme catalyses a diacylglycerol + H2O = a monoacylglycerol + a fatty acid + H(+). Secreted lipase that hydrolyzes acylglycerol lipids such as triacylglycerols and consequently releases free fatty acid. Can hydrolyze 4-nitrophenyl palmitate to release 4-nitrophenol and palmitoic acid. Due to an absence of fatty acid synthase genes in Malassezia species, secretory lipases are essential for the yeast to generate free fatty acids from degradation of sebum and assimilate them as lipid sources for growth. Plays an essential role at the pathogen-host interface during disease progression. The chain is Secreted triacylglycerol lipase LIP5 from Malassezia restricta (strain ATCC 96810 / NBRC 103918 / CBS 7877) (Seborrheic dermatitis infection agent).